The chain runs to 332 residues: Methionine synthase (332 aa).

Positions 211, 213, and 296 each coordinate Zn(2+).

Belongs to the archaeal MetE family. It depends on Zn(2+) as a cofactor.

Its pathway is amino-acid biosynthesis; L-methionine biosynthesis via de novo pathway. In terms of biological role, catalyzes the transfer of a methyl group to L-homocysteine resulting in methionine formation. The physiological methyl donor is unknown. The sequence is that of Methionine synthase from Saccharolobus solfataricus (strain ATCC 35092 / DSM 1617 / JCM 11322 / P2) (Sulfolobus solfataricus).